Consider the following 233-residue polypeptide: MIDHKVHLSEAFFGRRKGKRLRNSQLARIKMLLPTLKIDLNNSAPPDLTSLFPSKVREVRLEIGFGGGEHLLHEMEHFPQTGFIGVEPFINGMAKMLMSLEQHKQHQNHLRLYDDDATRLLDWLPNASLDGIDLLYPDPWPKKKHWKRRFINMKNLNRVARVLKIGKKFRFATDIDSYANWTLYYFTHHHSFEWEAENLKDWKTPYPLWPGTRYEEKALREGRTPTYLTFIKK.

The S-adenosyl-L-methionine site is built by Glu-62, Glu-87, Asp-116, and Asp-138. Residue Asp-138 is part of the active site. Substrate-binding positions include Lys-142, Asp-174, and 212-215 (TRYE).

This sequence belongs to the class I-like SAM-binding methyltransferase superfamily. TrmB family.

It catalyses the reaction guanosine(46) in tRNA + S-adenosyl-L-methionine = N(7)-methylguanosine(46) in tRNA + S-adenosyl-L-homocysteine. It functions in the pathway tRNA modification; N(7)-methylguanine-tRNA biosynthesis. In terms of biological role, catalyzes the formation of N(7)-methylguanine at position 46 (m7G46) in tRNA. The chain is tRNA (guanine-N(7)-)-methyltransferase from Bartonella quintana (strain Toulouse) (Rochalimaea quintana).